We begin with the raw amino-acid sequence, 276 residues long: Glutamate racemase (276 aa).

Substrate contacts are provided by residues 9–10 (DS) and 41–42 (YG). Cys-72 (proton donor/acceptor) is an active-site residue. 73-74 (NT) provides a ligand contact to substrate. Catalysis depends on Cys-183, which acts as the Proton donor/acceptor. 184 to 185 (TH) serves as a coordination point for substrate.

This sequence belongs to the aspartate/glutamate racemases family.

It catalyses the reaction L-glutamate = D-glutamate. It functions in the pathway cell wall biogenesis; peptidoglycan biosynthesis. Its function is as follows. Provides the (R)-glutamate required for cell wall biosynthesis. The chain is Glutamate racemase from Shouchella clausii (strain KSM-K16) (Alkalihalobacillus clausii).